Consider the following 95-residue polypeptide: Co-chaperonin GroES (95 aa).

The segment at 36–55 is disordered; the sequence is QEGEVVAVGSGKTLDDGSKV.

Belongs to the GroES chaperonin family. As to quaternary structure, heptamer of 7 subunits arranged in a ring. Interacts with the chaperonin GroEL.

Its subcellular location is the cytoplasm. Functionally, together with the chaperonin GroEL, plays an essential role in assisting protein folding. The GroEL-GroES system forms a nano-cage that allows encapsulation of the non-native substrate proteins and provides a physical environment optimized to promote and accelerate protein folding. GroES binds to the apical surface of the GroEL ring, thereby capping the opening of the GroEL channel. In Natranaerobius thermophilus (strain ATCC BAA-1301 / DSM 18059 / JW/NM-WN-LF), this protein is Co-chaperonin GroES.